The sequence spans 470 residues: V-type ATP synthase beta chain (470 aa).

Belongs to the ATPase alpha/beta chains family.

In terms of biological role, produces ATP from ADP in the presence of a proton gradient across the membrane. The V-type beta chain is a regulatory subunit. In Deinococcus geothermalis (strain DSM 11300 / CIP 105573 / AG-3a), this protein is V-type ATP synthase beta chain.